The chain runs to 521 residues: Sphingolipid C9-methyltransferase 2 (521 aa).

The next 2 membrane-spanning stretches (helical) occupy residues 60 to 80 (VLIS…GGGF) and 85 to 105 (FFAI…ISAI). S-adenosyl-L-methionine-binding positions include 225 to 226 (YT), 262 to 270 (MLDIGCGWG), 288 to 293 (TLGRNQ), and 318 to 319 (YR).

The protein belongs to the CFA/CMAS family.

The protein localises to the membrane. It catalyses the reaction a (4E,8E)-4-sphinga-4,8-dienine ceramide + S-adenosyl-L-methionine = a 9-methyl-(4E,8E)-sphinga-4,8-dienine ceramide + S-adenosyl-L-homocysteine + H(+). It functions in the pathway lipid metabolism; sphingolipid metabolism. Functionally, catalyzes methylation of the sphingoid base component of glucosylceramides (GluCers) at the C9-position. Sphingolipid C9-methylation requires 4,8-desaturated ceramides as substrates. Glucosylceramides play important roles in growth, differentiation and pathogenicity. The methyl group at the C9-position distinguishes fungal glucosylceramides from those of plants and animals and may thus play a role in host-pathogen interactions enabling the host to recognize the fungal attack and initiate specific defense responses. However, C-9 methylation of GlcCers is not essential for the sensitivity of F.graminearum to plant defensins MsDef1 and RsAFP2. The protein is Sphingolipid C9-methyltransferase 2 of Gibberella zeae (strain ATCC MYA-4620 / CBS 123657 / FGSC 9075 / NRRL 31084 / PH-1) (Wheat head blight fungus).